The chain runs to 293 residues: 33 kDa chaperonin (293 aa).

Disulfide bonds link Cys237–Cys239 and Cys271–Cys274.

Belongs to the HSP33 family. Under oxidizing conditions two disulfide bonds are formed involving the reactive cysteines. Under reducing conditions zinc is bound to the reactive cysteines and the protein is inactive.

It is found in the cytoplasm. Its function is as follows. Redox regulated molecular chaperone. Protects both thermally unfolding and oxidatively damaged proteins from irreversible aggregation. Plays an important role in the bacterial defense system toward oxidative stress. The polypeptide is 33 kDa chaperonin (Haemophilus influenzae (strain 86-028NP)).